Reading from the N-terminus, the 593-residue chain is Salivary alpha-glucosidase (593 aa).

The first 19 residues, 1-19, serve as a signal peptide directing secretion; that stretch reads MPPLGVLLLLVALGHSTQG. Residues Asp-49, Asp-51, Asp-53, Ile-55, Asp-57, and Asn-130 each contribute to the Ca(2+) site. N-linked (GlcNAc...) asparagine glycosylation is found at Asn-130 and Asn-163. Ca(2+) is bound by residues Asp-201, Tyr-235, Leu-236, and Glu-238. 6 N-linked (GlcNAc...) asparagine glycosylation sites follow: Asn-295, Asn-310, Asn-338, Asn-414, Asn-445, and Asn-453. Residue Asn-338 coordinates N-acetyl-beta-D-glucosamine.

The protein belongs to the glycosyl hydrolase 13 family. Saliva (at protein level). Proximal lateral lobes of the salivary gland (at protein level).

It localises to the secreted. It carries out the reaction Hydrolysis of terminal, non-reducing (1-&gt;4)-linked alpha-D-glucose residues with release of alpha-D-glucose.. Functionally, functions as a glucosidase that shows high activity toward sucrose, a major component of nectar. Assists the mosquito in its sugar-feeding capabilities. The protein is Salivary alpha-glucosidase of Anopheles gambiae (African malaria mosquito).